Here is a 366-residue protein sequence, read N- to C-terminus: Dehydrogenase aclE (366 aa).

Positions 1 to 19 are cleaved as a signal peptide; sequence MSKRIRLGIVGLSADPSHC. N-linked (GlcNAc...) asparagine glycosylation is present at N330.

Belongs to the Gfo/Idh/MocA family.

It functions in the pathway mycotoxin biosynthesis. Its function is as follows. Dehydrogenase; part of the gene cluster that mediates the biosynthesis of aspirochlorine (or antibiotic A30641), an unusual halogenated spiro compound with distinctive antifungal properties due to selective inhibition of protein biosynthesis, and which is also active against bacteria, viruses, and murine tumor cells. The non-ribosomal peptide synthetase (NRPS) aclP is responsible the formation of the diketopiperazine (DKP) core from the condensation of 2 phenylalanine residues. One Phe residue is tailored into chlorotyrosine by hydroxylation and chlorination, whereas the second Phe undergoes an unprecedented C-C bond cleavage to be converted into glycine. After formation of the DKP, sulfur is incorporated into the DKP by conjugation with glutathione by aclG, followed by its stepwise degradation to the thiol by aclI, aclJ and aclK, and the dithiol oxidation by aclT. In addition, oxygenases (aclB, aclC, aclL and aclO) and O-methyltransferases (aclM and aclU) act as tailoring enzymes to produce the intermediate dechloroaspirochlorine. Ultimately, chlorination of dechloroaspirochlorine by the halogenase aclH is the last step in the aspirochlorine pathway. The protein is Dehydrogenase aclE of Aspergillus oryzae (strain ATCC 42149 / RIB 40) (Yellow koji mold).